The sequence spans 150 residues: Large ribosomal subunit protein bL9 (150 aa).

Belongs to the bacterial ribosomal protein bL9 family.

Binds to the 23S rRNA. The polypeptide is Large ribosomal subunit protein bL9 (Buchnera aphidicola subsp. Schizaphis graminum (strain Sg)).